A 311-amino-acid chain; its full sequence is Trem-like transcript 1 protein (311 aa).

Positions 1–15 (MGLTLLLLLLLGLEG) are cleaved as a signal peptide. Positions 16 to 121 (QGIVGSLPEV…PQILHRVSLN (106 aa)) constitute an Ig-like V-type domain. The Extracellular portion of the chain corresponds to 16–162 (QGIVGSLPEV…EPSQDEKSIP (147 aa)). Disulfide bonds link Cys38–Cys104 and Cys52–Cys59. Residues 163 to 183 (LIWGAVLLVGLLVAAVVLFAV) traverse the membrane as a helical segment. Topologically, residues 184–311 (MAKRKQGNRL…NPPNNQTPSS (128 aa)) are cytoplasmic. Cys196 carries the S-palmitoyl cysteine lipid modification. The disordered stretch occupies residues 229–263 (VPHIRLDSPPSFDNTTYTSLPLDSPSGKPSLPAPS). The segment covering 239–249 (SFDNTTYTSLP) has biased composition (polar residues). Positions 279 to 284 (VTYATV) match the ITIM motif. The interval 287–311 (PGGNKGGGTSCGPAQNPPNNQTPSS) is disordered.

As to quaternary structure, when phosphorylated, interacts with PTPN6. When phosphorylated, interacts with PTPN11. Post-translationally, phosphorylated on tyrosine residues. Detected in platelets, monocytic leukemia and in T-cell leukemia.

It is found in the cell membrane. It localises to the cytoplasm. Functionally, cell surface receptor that may play a role in the innate and adaptive immune response. The polypeptide is Trem-like transcript 1 protein (TREML1) (Homo sapiens (Human)).